A 153-amino-acid polypeptide reads, in one-letter code: Methylglyoxal synthase (153 aa).

Positions 3 to 153 (DQVNRPKGVT…SYLSRDVPGN (151 aa)) constitute an MGS-like domain. Residues histidine 19, lysine 23, 45 to 48 (TGTT), and 65 to 66 (SG) each bind substrate. The Proton donor/acceptor role is filled by aspartate 71. Substrate is bound at residue histidine 98.

Belongs to the methylglyoxal synthase family.

It catalyses the reaction dihydroxyacetone phosphate = methylglyoxal + phosphate. Its function is as follows. Catalyzes the formation of methylglyoxal from dihydroxyacetone phosphate. This is Methylglyoxal synthase from Hahella chejuensis (strain KCTC 2396).